The chain runs to 227 residues: 6,7-dimethyl-8-ribityllumazine synthase, chloroplastic (227 aa).

The transit peptide at 1–71 (MKSLASPPCL…LRSSFVQTAA (71 aa)) directs the protein to the chloroplast. 5-amino-6-(D-ribitylamino)uracil-binding positions include F94, 128-130 (SFE), and 152-154 (AVI). 157–158 (DT) serves as a coordination point for (2S)-2-hydroxy-3-oxobutyl phosphate. The Proton donor role is filled by H160. Residue F185 coordinates 5-amino-6-(D-ribitylamino)uracil. (2S)-2-hydroxy-3-oxobutyl phosphate is bound at residue R199.

Belongs to the DMRL synthase family. In terms of assembly, oligomer forming an icosahedral capsid.

It is found in the plastid. Its subcellular location is the chloroplast. The enzyme catalyses (2S)-2-hydroxy-3-oxobutyl phosphate + 5-amino-6-(D-ribitylamino)uracil = 6,7-dimethyl-8-(1-D-ribityl)lumazine + phosphate + 2 H2O + H(+). It functions in the pathway cofactor biosynthesis; riboflavin biosynthesis; riboflavin from 2-hydroxy-3-oxobutyl phosphate and 5-amino-6-(D-ribitylamino)uracil: step 1/2. In terms of biological role, catalyzes the formation of 6,7-dimethyl-8-ribityllumazine by condensation of 5-amino-6-(D-ribitylamino)uracil with 3,4-dihydroxy-2-butanone 4-phosphate. This is the penultimate step in the biosynthesis of riboflavin. The chain is 6,7-dimethyl-8-ribityllumazine synthase, chloroplastic from Arabidopsis thaliana (Mouse-ear cress).